A 222-amino-acid polypeptide reads, in one-letter code: Sororin-like protein (222 aa).

Positions 1 to 189 (MEAPRSVGGR…VKQEKEDPVS (189 aa)) are disordered. The span at 24–33 (SRSSQQSSSS) shows a compositional bias: low complexity. Over residues 47–60 (RLVEQTTLKEKPKD) the composition is skewed to basic and acidic residues. Residues 88–105 (ADLASPASAPSRPQTSRS) show a composition bias toward low complexity. The short motif at 155–162 (GKKTRQAS) is the Nuclear localization signal element. Residues 167 to 179 (KTLKVAPKKRQRT) are compositionally biased toward basic residues. The C-terminal Sororin domain stretch occupies residues 192 to 214 (CQDYIEKQKAYFAEIDAFELPVE).

It belongs to the sororin family.

The protein resides in the nucleus. Regulator of sister chromatid cohesion in mitosis stabilizing cohesin complex association with chromatin. Antagonizes the action of WAPL proteins (WAPL1 and WAPL2) which stimulates cohesin dissociation from chromatin, particularly during somatic division in root cells and meiocytes during anaphase I. Required for centromeric sister chromatid cohesion during male meiosis (microsporogenesis). Cohesion ensures that chromosome partitioning is accurate in dividing cells and may play an important role in DNA repair. The polypeptide is Sororin-like protein (Arabidopsis thaliana (Mouse-ear cress)).